The primary structure comprises 222 residues: Superoxide dismutase [Mn], mitochondrial (222 aa).

A mitochondrion-targeting transit peptide spans 1 to 24 (MLSRAACSTSRRLVPALSVLGSRQ). H50 serves as a coordination point for Mn(2+). Y58 carries the 3'-nitrotyrosine modification. N6-acetyllysine; alternate occurs at positions 68 and 75. N6-succinyllysine; alternate is present on residues K68 and K75. H98 contributes to the Mn(2+) binding site. N6-acetyllysine; alternate occurs at positions 122 and 130. N6-succinyllysine; alternate occurs at positions 122 and 130. 2 residues coordinate Mn(2+): D183 and H187. Residue K202 is modified to N6-acetyllysine.

It belongs to the iron/manganese superoxide dismutase family. As to quaternary structure, homotetramer. Requires Mn(2+) as cofactor. In terms of processing, nitrated under oxidative stress. Nitration coupled with oxidation inhibits the catalytic activity. Post-translationally, acetylation at Lys-122 decreases enzymatic activity. Deacetylated by SIRT3 upon exposure to ionizing radiations or after long fasting. Polyubiquitinated; leading to proteasomal degradation. Deubiquitinated by USP36 which increases protein stability.

Its subcellular location is the mitochondrion matrix. The catalysed reaction is 2 superoxide + 2 H(+) = H2O2 + O2. Functionally, destroys superoxide anion radicals which are normally produced within the cells and which are toxic to biological systems. In Bos taurus (Bovine), this protein is Superoxide dismutase [Mn], mitochondrial (SOD2).